The chain runs to 440 residues: Chromosome partition protein MukF (440 aa).

A leucine-zipper region spans residues 208–236 (LSETSGTLRELQDTLEAAGDKLQANLLRI).

This sequence belongs to the MukF family. In terms of assembly, interacts, and probably forms a ternary complex, with MukE and MukB via its C-terminal region. The complex formation is stimulated by calcium or magnesium. It is required for an interaction between MukE and MukB.

Its subcellular location is the cytoplasm. It localises to the nucleoid. In terms of biological role, involved in chromosome condensation, segregation and cell cycle progression. May participate in facilitating chromosome segregation by condensation DNA from both sides of a centrally located replisome during cell division. Not required for mini-F plasmid partitioning. Probably acts via its interaction with MukB and MukE. Overexpression results in anucleate cells. It has a calcium binding activity. The sequence is that of Chromosome partition protein MukF from Salmonella typhi.